The primary structure comprises 90 residues: DNA-binding protein HU (90 aa).

It belongs to the bacterial histone-like protein family. In terms of assembly, homodimer.

Histone-like DNA-binding protein which is capable of wrapping DNA to stabilize it, and thus to prevent its denaturation under extreme environmental conditions. This chain is DNA-binding protein HU (hup), found in Pasteurella multocida (strain Pm70).